The following is a 300-amino-acid chain: Acetylglutamate kinase (300 aa).

Residues 67–68 (GG), Arg-89, and Asn-194 contribute to the substrate site.

The protein belongs to the acetylglutamate kinase family. ArgB subfamily.

The protein resides in the cytoplasm. The catalysed reaction is N-acetyl-L-glutamate + ATP = N-acetyl-L-glutamyl 5-phosphate + ADP. Its pathway is amino-acid biosynthesis; L-arginine biosynthesis; N(2)-acetyl-L-ornithine from L-glutamate: step 2/4. Functionally, catalyzes the ATP-dependent phosphorylation of N-acetyl-L-glutamate. The sequence is that of Acetylglutamate kinase from Saccharophagus degradans (strain 2-40 / ATCC 43961 / DSM 17024).